A 498-amino-acid chain; its full sequence is ATP synthase subunit beta, chloroplastic (498 aa).

172–179 serves as a coordination point for ATP; the sequence is GGAGVGKT.

Belongs to the ATPase alpha/beta chains family. In terms of assembly, F-type ATPases have 2 components, CF(1) - the catalytic core - and CF(0) - the membrane proton channel. CF(1) has five subunits: alpha(3), beta(3), gamma(1), delta(1), epsilon(1). CF(0) has four main subunits: a(1), b(1), b'(1) and c(9-12).

It is found in the plastid. The protein localises to the chloroplast thylakoid membrane. It carries out the reaction ATP + H2O + 4 H(+)(in) = ADP + phosphate + 5 H(+)(out). Produces ATP from ADP in the presence of a proton gradient across the membrane. The catalytic sites are hosted primarily by the beta subunits. The chain is ATP synthase subunit beta, chloroplastic from Beta vulgaris (Sugar beet).